We begin with the raw amino-acid sequence, 294 residues long: Halotolerance protein HAL1 (294 aa).

The tract at residues 115–153 (LKRGTKEQEDINSSTSKKSAVINNFSGEKTPNPRPQSSN) is disordered. Positions 125-153 (INSSTSKKSAVINNFSGEKTPNPRPQSSN) are enriched in polar residues. Ser-266 is subject to Phosphoserine.

It localises to the cytoplasm. Functionally, involved in salt tolerance. This Saccharomyces cerevisiae (strain ATCC 204508 / S288c) (Baker's yeast) protein is Halotolerance protein HAL1 (HAL1).